The sequence spans 406 residues: Acetate kinase (406 aa).

Asn7 lines the Mg(2+) pocket. Lys14 is an ATP binding site. Arg90 is a substrate binding site. The active-site Proton donor/acceptor is the Asp147. ATP-binding positions include 207–211 (HLGNG), 283–285 (DMR), and 331–335 (GVGEN). Mg(2+) is bound at residue Glu385.

The protein belongs to the acetokinase family. Homodimer. The cofactor is Mg(2+). Requires Mn(2+) as cofactor.

The protein localises to the cytoplasm. The enzyme catalyses acetate + ATP = acetyl phosphate + ADP. Its pathway is metabolic intermediate biosynthesis; acetyl-CoA biosynthesis; acetyl-CoA from acetate: step 1/2. Catalyzes the formation of acetyl phosphate from acetate and ATP. Can also catalyze the reverse reaction. The sequence is that of Acetate kinase from Fervidobacterium nodosum (strain ATCC 35602 / DSM 5306 / Rt17-B1).